Reading from the N-terminus, the 473-residue chain is Ammonium transporter Rh type C (473 aa).

The Cytoplasmic portion of the chain corresponds to Met-1–Trp-9. The helical transmembrane segment at Arg-10–Val-30 threads the bilayer. The Extracellular portion of the chain corresponds to Arg-31 to Tyr-61. Asn-48 carries an N-linked (GlcNAc...) asparagine glycan. A helical membrane pass occupies residues Pro-62 to Leu-82. Topologically, residues Gln-83–Gly-86 are cytoplasmic. The chain crosses the membrane as a helical span at residues Phe-87–Met-107. Over Gln-108 to Ser-125 the chain is Extracellular. Residues Leu-126–Gly-145 traverse the membrane as a helical segment. At Lys-146 to Gln-151 the chain is on the cytoplasmic side. Residues Ile-152–Leu-171 form a helical membrane-spanning segment. Topologically, residues Asn-172–Ala-179 are extracellular. The helical transmembrane segment at Gly-180–Leu-200 threads the bilayer. The Cytoplasmic portion of the chain corresponds to Ser-201–Asp-219. The helical transmembrane segment at Leu-220–Ile-240 threads the bilayer. The Extracellular portion of the chain corresponds to Ser-241 to Ala-251. Residues Ile-252 to Val-272 form a helical membrane-spanning segment. Topologically, residues Asn-273–Asn-285 are cytoplasmic. A helical transmembrane segment spans residues Ala-286–Gly-306. Ser-307 is a topological domain (extracellular). Residues Leu-308–Ile-328 traverse the membrane as a helical segment. Residues Leu-329–Asn-343 lie on the Cytoplasmic side of the membrane. Residues Leu-344–Thr-364 traverse the membrane as a helical segment. At Glu-365–Ala-396 the chain is on the extracellular side. Residues Ala-397–Leu-417 form a helical membrane-spanning segment. At Lys-418–Lys-473 the chain is on the cytoplasmic side.

This sequence belongs to the ammonium transporter (TC 2.A.49) family. Rh subfamily. In terms of assembly, homotrimer.

It is found in the apical cell membrane. Functions as an ammonia transporter. The chain is Ammonium transporter Rh type C (rhcg) from Xenopus laevis (African clawed frog).